A 124-amino-acid chain; its full sequence is Prefoldin subunit beta (124 aa).

The protein belongs to the prefoldin subunit beta family. In terms of assembly, heterohexamer of two alpha and four beta subunits.

It is found in the cytoplasm. In terms of biological role, molecular chaperone capable of stabilizing a range of proteins. Seems to fulfill an ATP-independent, HSP70-like function in archaeal de novo protein folding. This chain is Prefoldin subunit beta (pfdB), found in Thermoplasma volcanium (strain ATCC 51530 / DSM 4299 / JCM 9571 / NBRC 15438 / GSS1).